The primary structure comprises 144 residues: 3-hydroxyacyl-[acyl-carrier-protein] dehydratase FabZ (144 aa).

Histidine 48 is an active-site residue.

Belongs to the thioester dehydratase family. FabZ subfamily.

It is found in the cytoplasm. The enzyme catalyses a (3R)-hydroxyacyl-[ACP] = a (2E)-enoyl-[ACP] + H2O. Its function is as follows. Involved in unsaturated fatty acids biosynthesis. Catalyzes the dehydration of short chain beta-hydroxyacyl-ACPs and long chain saturated and unsaturated beta-hydroxyacyl-ACPs. The sequence is that of 3-hydroxyacyl-[acyl-carrier-protein] dehydratase FabZ from Bacillus cereus (strain AH187).